A 216-amino-acid polypeptide reads, in one-letter code: Octanoyltransferase (216 aa).

Positions 34–209 (ENTIDEIWLV…KMNQQLDYSH (176 aa)) constitute a BPL/LPL catalytic domain. Substrate is bound by residues 73-80 (RGGQITFH), 140-142 (SLG), and 153-155 (GLA). Catalysis depends on C171, which acts as the Acyl-thioester intermediate.

This sequence belongs to the LipB family.

It localises to the cytoplasm. The catalysed reaction is octanoyl-[ACP] + L-lysyl-[protein] = N(6)-octanoyl-L-lysyl-[protein] + holo-[ACP] + H(+). Its pathway is protein modification; protein lipoylation via endogenous pathway; protein N(6)-(lipoyl)lysine from octanoyl-[acyl-carrier-protein]: step 1/2. Functionally, catalyzes the transfer of endogenously produced octanoic acid from octanoyl-acyl-carrier-protein onto the lipoyl domains of lipoate-dependent enzymes. Lipoyl-ACP can also act as a substrate although octanoyl-ACP is likely to be the physiological substrate. The polypeptide is Octanoyltransferase (Psychromonas ingrahamii (strain DSM 17664 / CCUG 51855 / 37)).